We begin with the raw amino-acid sequence, 295 residues long: Forkhead box protein N5 (295 aa).

A disordered region spans residues 119–146; the sequence is STVEDSEDEAPTSCSDLMTDDDNDDSYN. The segment at residues 178-275 is a DNA-binding region (fork-head); sequence RPPLNYCNLI…NEMHALSDDL (98 aa).

As to expression, ubiquitously expressed in early cleavage stage and gastrula stage embryos.

The protein localises to the nucleus. The sequence is that of Forkhead box protein N5 from Xenopus laevis (African clawed frog).